A 172-amino-acid polypeptide reads, in one-letter code: Adenine phosphoribosyltransferase (172 aa).

The protein belongs to the purine/pyrimidine phosphoribosyltransferase family. In terms of assembly, homodimer.

The protein localises to the cytoplasm. It carries out the reaction AMP + diphosphate = 5-phospho-alpha-D-ribose 1-diphosphate + adenine. The protein operates within purine metabolism; AMP biosynthesis via salvage pathway; AMP from adenine: step 1/1. Catalyzes a salvage reaction resulting in the formation of AMP, that is energically less costly than de novo synthesis. This Clostridium acetobutylicum (strain ATCC 824 / DSM 792 / JCM 1419 / IAM 19013 / LMG 5710 / NBRC 13948 / NRRL B-527 / VKM B-1787 / 2291 / W) protein is Adenine phosphoribosyltransferase.